We begin with the raw amino-acid sequence, 778 residues long: Transcription factor kayak (778 aa).

2 stretches are compositionally biased toward low complexity: residues 24–54 (AQQL…HTQQ) and 77–98 (QYYQ…QRQL). 6 disordered regions span residues 24–57 (AQQL…QNGL), 76–130 (NQYY…HQLR), 183–223 (QPTA…TTNG), 294–320 (APLV…VLAS), 356–414 (ASVM…GTGG), and 427–478 (RNTN…RKRR). A compositionally biased stretch (polar residues) spans 99-108 (PTQQPAASYE). Composition is skewed to low complexity over residues 109 to 130 (QQQQ…HQLR) and 183 to 222 (QPTA…TTTN). Low complexity predominate over residues 382–402 (ISDTSSGATDSTSYQNGHMMG). Over residues 403–414 (NSGGGNGGGTGG) the composition is skewed to gly residues. The segment covering 427–436 (RNTNTSNSAT) has biased composition (polar residues). The bZIP domain occupies 457–520 (EEKRRIRRER…NQLEYFLQAH (64 aa)). The interval 459 to 478 (KRRIRRERNKQAAARCRKRR) is basic motif. Residues 485–513 (LTEEVELLEKRGENLKKEMELLNETKNQL) form a leucine-zipper region. Low complexity predominate over residues 550–571 (GSCGSGSSHHNNNSNSNDSSSG). Disordered stretches follow at residues 550–594 (GSCG…DLKP) and 756–778 (TSQN…LVSL). Polar residues predominate over residues 579–589 (TLNSTGRSNSP). Position 588 is a phosphoserine (Ser588).

Belongs to the bZIP family. Fos subfamily. Homodimer. Heterodimer with Jra. The kay-Jra heterodimer binds more stably to the AP-1 site than either of the two proteins alone.

The protein localises to the nucleus. Developmentally regulated transcription factor AP-1 binds and recognizes the enhancer DNA sequence: 5'-TGA[CG]TCA-3'. May play a role in the function or determination of a particular subset of cells in the developing embryo. It is able to carry out its function either independently of or in conjunction with Jra. This chain is Transcription factor kayak, found in Drosophila pseudoobscura pseudoobscura (Fruit fly).